A 64-amino-acid chain; its full sequence is Temporin-ALf (64 aa).

Positions 1-22 (MFTLKKSLLLLFFLGTINLSLC) are cleaved as a signal peptide. A propeptide spanning residues 23 to 46 (EQERNAEEERRDEPDERNAEVEKR) is cleaved from the precursor. Position 62 is a leucine amide (L62).

Expressed by the skin glands.

It localises to the secreted. In terms of biological role, antimicrobial peptide with activity against Gram-positive and Gram-negative bacteria and against fungi. Has been tested against S.aureus (MIC=2.5 ug/mL), B.pumilus (MIC=5.0 ug/mL), B.cereus (MIC=30.0 ug/mL), E.coli (MIC=2.5 ug/mL), B.dysenteriae (MIC=5.0 ug/mL), A.cacoaceticus (MIC=30.0 ug/mL), P.aeruginosa (MIC=5.0 ug/mL) and C.albicans (MIC=2.5 ug/mL). Also shows a weak hemolytic activity. The protein is Temporin-ALf of Amolops loloensis (Lolokou Sucker Frog).